Consider the following 460-residue polypeptide: UDP-N-acetylmuramoylalanine--D-glutamate ligase (460 aa).

An ATP-binding site is contributed by 117-123 (GTNGKTT).

It belongs to the MurCDEF family.

It is found in the cytoplasm. The enzyme catalyses UDP-N-acetyl-alpha-D-muramoyl-L-alanine + D-glutamate + ATP = UDP-N-acetyl-alpha-D-muramoyl-L-alanyl-D-glutamate + ADP + phosphate + H(+). It participates in cell wall biogenesis; peptidoglycan biosynthesis. Cell wall formation. Catalyzes the addition of glutamate to the nucleotide precursor UDP-N-acetylmuramoyl-L-alanine (UMA). The sequence is that of UDP-N-acetylmuramoylalanine--D-glutamate ligase from Prochlorococcus marinus (strain MIT 9313).